The primary structure comprises 192 residues: Probable GTP-binding protein EngB (192 aa).

The EngB-type G domain maps to 22–192 (GRPEIVFVGR…LLERLDLFSQ (171 aa)). GTP contacts are provided by residues 30–37 (GRSNVGKS), 57–61 (GKTRL), 75–78 (DLPG), 142–145 (TKWD), and 172–174 (YSS). Mg(2+) contacts are provided by serine 37 and threonine 59.

The protein belongs to the TRAFAC class TrmE-Era-EngA-EngB-Septin-like GTPase superfamily. EngB GTPase family. It depends on Mg(2+) as a cofactor.

Its function is as follows. Necessary for normal cell division and for the maintenance of normal septation. This chain is Probable GTP-binding protein EngB, found in Chlorobaculum parvum (strain DSM 263 / NCIMB 8327) (Chlorobium vibrioforme subsp. thiosulfatophilum).